The sequence spans 7081 residues: Leucine-rich repeat transmembrane protein CCDC168 (7081 aa).

The helical transmembrane segment at 37-57 (WVAIFFIILLGIIFEIILMKA) threads the bilayer. LRR repeat units lie at residues 233–256 (PCPL…VRNQ) and 420–445 (NAEF…SVKA). Residues 717-745 (EDLQSSENSHLQLSNGEELPTSTPKTQRC) form a disordered region. Residues 718 to 742 (DLQSSENSHLQLSNGEELPTSTPKT) are compositionally biased toward polar residues. An LRR 3 repeat occupies 865–890 (ADTLRIIRLSHSASKQEKLPDEKETQ). The tract at residues 943–1009 (QISSGSSKAP…DPKNPLTMPE (67 aa)) is disordered. Residues 958-970 (VQPQTLSTQTILE) show a composition bias toward polar residues. A compositionally biased stretch (basic and acidic residues) spans 981 to 999 (QVEKVKQSTDRPTDRESAG). Residues 1050–1075 (LPAVALGSFNNHLLTLPYFKRQEIKK) form an LRR 4 repeat. 2 stretches are compositionally biased toward polar residues: residues 1274 to 1286 (KCTA…SPIS) and 1295 to 1304 (LNQTRESYIP). Residues 1274-1304 (KCTADSETPSPISGKSLIGDPLNQTRESYIP) form a disordered region. Residues 1501 to 1527 (NCLTLELHINGQRLQHQTGFEQTTLET) form an LRR 5 repeat. 2 stretches are compositionally biased toward basic and acidic residues: residues 1773-1784 (ETEKDTLREKRL) and 1793-1804 (TSPHEDSITSRD). Disordered regions lie at residues 1773–1804 (ETEK…TSRD), 1954–1973 (KSPH…ESGS), 2008–2031 (STHQ…EGRS), and 2083–2103 (TGKS…NPRR). Residues 1964-1973 (ANLTDMESGS) show a composition bias toward polar residues. The LRR 6 repeat unit spans residues 2373–2397 (KNQINTIQLSERKIILNPKCLTMKE). Residues 2637-2680 (GRHSPASEEMKRQNGRLKMADRSSPQGRPLQAKQSAVSQSPDTA) are disordered. Polar residues predominate over residues 2668–2678 (AKQSAVSQSPD). LRR repeat units follow at residues 2727–2749 (SKIH…KTRA), 2832–2855 (IQQQ…VYDS), 2862–2889 (IKKL…KLEK), 3433–3458 (LSSR…RLEW), and 3630–3653 (ILSL…NVKS). The interval 3730–3756 (SLSHSNSNSRTKAGKDKSGTLKGCLPP) is disordered. Residues 3875–3898 (MRGITRFCLSSSTQQELSDTMEKC) form an LRR 12 repeat. 8 disordered regions span residues 4119-4260 (ELSH…DGDK), 4293-4428 (QGII…KQET), 4729-4756 (QESL…LLPQ), 4794-4817 (SPLS…QDRT), 4831-4859 (MPSL…RLAN), 4928-4955 (GVQE…YLNC), 4966-4985 (LGKT…SDSG), and 5191-5212 (QKVK…SPLH). Basic and acidic residues-rich tracts occupy residues 4121–4133 (SHQK…EKAD), 4147–4176 (KAKD…DKGL), 4192–4245 (EPGK…EQQK), 4329–4361 (QKAK…DLKG), 4375–4401 (EPGK…NRDG), and 4415–4426 (EQEKRDGHKSKQ). A compositionally biased stretch (polar residues) spans 4731–4743 (SLPSRQTAPTKPT). Basic and acidic residues-rich tracts occupy residues 4746–4756 (LVKKEKQLLPQ) and 4798–4817 (KRKE…QDRT). Residues 5203–5212 (KSPSRSSPLH) are compositionally biased toward polar residues. One copy of the LRR 13 repeat lies at 5311 to 5336 (LSQLELDKETHLGNEMLRLKRPILRR). The disordered stretch occupies residues 5467 to 5496 (LPDTEKTADAEARSGDVRKGKPHRSQKENR). Basic and acidic residues predominate over residues 5469-5496 (DTEKTADAEARSGDVRKGKPHRSQKENR). An LRR 14 repeat occupies 5522–5545 (LNAKELVLNINKLEKKVHKDKDEA). Disordered regions lie at residues 5564 to 5583 (LDSG…SSCP) and 5763 to 5792 (QQET…SNDR). Basic and acidic residues predominate over residues 5779-5792 (KFDKPKEDGQSNDR). LRR repeat units lie at residues 5901–5924 (KQAL…LFPP), 6259–6282 (PDLR…ECPS), 6419–6442 (HLES…SLQM), 6552–6575 (HFSV…SYAM), and 6613–6637 (QIDL…TFPK). 2 disordered regions span residues 6859–6878 (CKSH…SPDW) and 6916–6950 (APLT…RSDL). Residues 6860-6871 (KSHKSRKYRSSS) are compositionally biased toward basic residues. Positions 6937-6950 (HPESQERKKARSDL) are enriched in basic and acidic residues. The LRR 20 repeat unit spans residues 7012–7036 (NRPFFFACVPADSLEVIPKTIRWTI).

Its subcellular location is the membrane. This chain is Leucine-rich repeat transmembrane protein CCDC168, found in Homo sapiens (Human).